Reading from the N-terminus, the 674-residue chain is L-type lectin-domain containing receptor kinase SIT1 (674 aa).

The signal sequence occupies residues 1-27 (MRRPELIMRSLPLILFLSLGSFHLAAA). The Extracellular portion of the chain corresponds to 28–301 (AVDDQFTFDG…IARAPSNVLK (274 aa)). The interval 31–275 (DQFTFDGFAG…VLAWSFKMDG (245 aa)) is legume-lectin like. N-linked (GlcNAc...) asparagine glycans are attached at residues Asn-42, Asn-61, Asn-143, Asn-196, Asn-219, Asn-240, and Asn-281. A helical transmembrane segment spans residues 302–322 (ILLPIASAALVSALAIAVLVI). Topologically, residues 323–674 (HRRRRRYAEL…GNISDIPRAR (352 aa)) are cytoplasmic. One can recognise a Protein kinase domain in the interval 357-636 (FSDERLLGFG…LDGAMPLPEL (280 aa)). Residues 363–371 (LGFGGFGRV) and Lys-386 each bind ATP. Asp-482 acts as the Proton acceptor in catalysis. 4 positions are modified to phosphothreonine: Thr-511, Thr-515, Thr-516, and Thr-521.

It in the C-terminal section; belongs to the protein kinase superfamily. Ser/Thr protein kinase family. The protein in the N-terminal section; belongs to the leguminous lectin family. Interacts with B'KAPPA. Autophosphorylated at Thr-511, Thr-515 or Thr-516, and Thr-521 in response to salt stress. Dephosphorylated by phosphatase 2A in response to salt stress. In terms of tissue distribution, expressed in root epidermal cells.

The protein localises to the cell membrane. The catalysed reaction is L-seryl-[protein] + ATP = O-phospho-L-seryl-[protein] + ADP + H(+). The enzyme catalyses L-threonyl-[protein] + ATP = O-phospho-L-threonyl-[protein] + ADP + H(+). Its activity is regulated as follows. Activated by autophosphorylation in response to salt stress. Its function is as follows. Lectin-domain containing receptor kinase involved in salt stress response. Acts as a negative regulator of salt tolerance. Mediates salt sensitivity by phosphorylating and activating MPK3 and MPK6. Promotes ethylene production and mediates salt-induced ethylene signaling. Promotes the accumulation of reactive oxygen species (ROS) under salt stress conditions. Its kinase activity is triggered by salt stress and is required for its function in salt stress response. Phosphorylates B'KAPPA, a B regulatory subunit of phosphatase 2A (PP2A). This chain is L-type lectin-domain containing receptor kinase SIT1, found in Oryza sativa subsp. japonica (Rice).